The primary structure comprises 229 residues: ABC transporter I family member 1 (229 aa).

An ABC transporter domain is found at 11–228 (LLLQNVSCMR…LIDMLDRADI (218 aa)). ATP is bound at residue 43–50 (GTNGSGKS).

This sequence belongs to the ABC transporter superfamily. ABCI family.

Its subcellular location is the membrane. The enzyme catalyses heme b(in) + ATP + H2O = heme b(out) + ADP + phosphate + H(+). Part of the ABC transporter complex CcmAB involved in the biogenesis of c-type cytochromes; once thought to export heme, this seems not to be the case, but its exact role is uncertain. Responsible for energy coupling to the transport system. The protein is ABC transporter I family member 1 (ABCI1) of Arabidopsis thaliana (Mouse-ear cress).